Reading from the N-terminus, the 142-residue chain is Large ribosomal subunit protein uL22 (142 aa).

The disordered stretch occupies residues 122-142; it reads RAEAPEETKPSRGTNKEQKAA.

The protein belongs to the universal ribosomal protein uL22 family. As to quaternary structure, part of the 50S ribosomal subunit.

In terms of biological role, this protein binds specifically to 23S rRNA; its binding is stimulated by other ribosomal proteins, e.g. L4, L17, and L20. It is important during the early stages of 50S assembly. It makes multiple contacts with different domains of the 23S rRNA in the assembled 50S subunit and ribosome. Its function is as follows. The globular domain of the protein is located near the polypeptide exit tunnel on the outside of the subunit, while an extended beta-hairpin is found that lines the wall of the exit tunnel in the center of the 70S ribosome. In Gluconobacter oxydans (strain 621H) (Gluconobacter suboxydans), this protein is Large ribosomal subunit protein uL22.